A 1567-amino-acid chain; its full sequence is ABC multidrug transporter MDR1 (1567 aa).

Positions 1 to 11 (MASQPPQPPSG) are enriched in pro residues. Residues 1-37 (MASQPPQPPSGQPDTQYEEYQSEVITETTNRPTPAAD) form a disordered region. Polar residues predominate over residues 22–32 (SEVITETTNRP). N-linked (GlcNAc...) asparagine glycans are attached at residues asparagine 149, asparagine 157, and asparagine 356. The ABC transporter 1 domain maps to 167–432 (VQYQDTFLSP…FEEMGWYCPP (266 aa)). A run of 6 helical transmembrane segments spans residues 543–563 (STIATNISQIMMALIIGSLFF), 571–591 (GFFAKGSVIFFAILLNGLMSI), 636–656 (IPIKFLLALVFNIIIYFLGGL), 661–681 (AKFFIFFLFTFITILTMSAIF), 691–711 (IPQALALAGVMILALVIYTGF), and 798–818 (LGILLGFLAFFYFVYLVVSEL). N-linked (GlcNAc...) asparagine glycosylation is found at asparagine 819, asparagine 895, and asparagine 912. The ABC transporter 2 domain maps to 891-1134 (FTWRNVTYDI…LLNYFETHGA (244 aa)). Residue 927-934 (GVSGAGKT) participates in ATP binding. The disordered stretch occupies residues 1172–1202 (ESRHVQQELDRIQSETSKRNEGHGQSAEKEP). The chain crosses the membrane as a helical span at residues 1231 to 1251 (IWGKLLLGLTSALFIGFSFFL). N-linked (GlcNAc...) asparagine glycosylation is present at asparagine 1253. Helical transmembrane passes span 1257-1277 (AGLQNSLFSIFMLTTIFSSLV), 1305-1325 (VFLLANIIVEIPYQILLGIIA), 1345-1365 (ILLLYCVQFFIFASTFAQMII), 1372-1392 (ETAGGIATTMFGLMVTFNGVL), and 1498-1518 (GIGWAYIVFNIFATVALYYLI).

It belongs to the ABC transporter superfamily. ABCG family. PDR (TC 3.A.1.205) subfamily.

The protein localises to the cell membrane. The catalysed reaction is voriconazole(in) + ATP + H2O = voriconazole(out) + ADP + phosphate + H(+). It catalyses the reaction fluconazole(in) + ATP + H2O = fluconazole(out) + ADP + phosphate + H(+). The enzyme catalyses (R)-miconazole(in) + ATP + H2O = (R)-miconazole(out) + ADP + phosphate + H(+). It carries out the reaction (S)-miconazole(in) + ATP + H2O = (S)-miconazole(out) + ADP + phosphate + H(+). In terms of biological role, pleiotropic ABC efflux transporter that may be involved in the modulation susceptibility to a wide range of unrelated cytotoxic compounds. The chain is ABC multidrug transporter MDR1 from Trichophyton tonsurans (strain CBS 112818) (Scalp ringworm fungus).